The primary structure comprises 578 residues: Tetratricopeptide repeat protein 39A (578 aa).

3 TPR repeats span residues 280-313, 470-503, and 511-544; these read AIFL…QQHW, CLVK…EKKI, and PNAL…YKNY.

Belongs to the TTC39 family.

The polypeptide is Tetratricopeptide repeat protein 39A (Ttc39a) (Mus musculus (Mouse)).